Reading from the N-terminus, the 718-residue chain is Probable protein S-acyltransferase 19 (718 aa).

The next 2 membrane-spanning stretches (helical) occupy residues Val-16 to Phe-36 and Ile-41 to Tyr-61. A disordered region spans residues Glu-100–Gly-125. The span at Ser-103–Lys-124 shows a compositional bias: polar residues. The DHHC domain occupies Leu-174–Ala-224. The active-site S-palmitoyl cysteine intermediate is Cys-204. The next 2 membrane-spanning stretches (helical) occupy residues Leu-222–Val-242 and Ala-277–Ile-297. 3 disordered regions span residues Ser-454 to Glu-511, Pro-598 to Gln-649, and Gly-664 to Lys-718. Composition is skewed to polar residues over residues Cys-479–Gly-488 and Pro-598–Pro-626. Basic and acidic residues predominate over residues Asp-673 to Asp-687.

It belongs to the DHHC palmitoyltransferase family.

It localises to the cell membrane. It carries out the reaction L-cysteinyl-[protein] + hexadecanoyl-CoA = S-hexadecanoyl-L-cysteinyl-[protein] + CoA. Palmitoyl acyltransferase. The polypeptide is Probable protein S-acyltransferase 19 (PAT19) (Arabidopsis thaliana (Mouse-ear cress)).